A 284-amino-acid chain; its full sequence is Probable endonuclease 4 (284 aa).

9 residues coordinate Zn(2+): H69, H109, E145, D179, H182, H216, D229, H231, and E261.

The protein belongs to the AP endonuclease 2 family. Zn(2+) is required as a cofactor.

The enzyme catalyses Endonucleolytic cleavage to 5'-phosphooligonucleotide end-products.. Functionally, endonuclease IV plays a role in DNA repair. It cleaves phosphodiester bonds at apurinic or apyrimidinic (AP) sites, generating a 3'-hydroxyl group and a 5'-terminal sugar phosphate. The polypeptide is Probable endonuclease 4 (Klebsiella pneumoniae subsp. pneumoniae (strain ATCC 700721 / MGH 78578)).